Consider the following 410-residue polypeptide: Tryptophan synthase beta chain (410 aa).

K98 carries the N6-(pyridoxal phosphate)lysine modification.

It belongs to the TrpB family. In terms of assembly, tetramer of two alpha and two beta chains. Requires pyridoxal 5'-phosphate as cofactor.

It catalyses the reaction (1S,2R)-1-C-(indol-3-yl)glycerol 3-phosphate + L-serine = D-glyceraldehyde 3-phosphate + L-tryptophan + H2O. The protein operates within amino-acid biosynthesis; L-tryptophan biosynthesis; L-tryptophan from chorismate: step 5/5. The beta subunit is responsible for the synthesis of L-tryptophan from indole and L-serine. In Dinoroseobacter shibae (strain DSM 16493 / NCIMB 14021 / DFL 12), this protein is Tryptophan synthase beta chain.